The following is a 467-amino-acid chain: Glutamate--tRNA ligase (467 aa).

The short motif at 14-24 (PSPTGFLHLGG) is the 'HIGH' region element. Residues 124 to 134 (PRYDGTWRPEP) show a composition bias toward basic and acidic residues. The interval 124-156 (PRYDGTWRPEPGKTLPPVPAGRKPVVRFKNPQD) is disordered. The short motif at 246–250 (KLSKR) is the 'KMSKS' region element. Lys249 provides a ligand contact to ATP.

It belongs to the class-I aminoacyl-tRNA synthetase family. Glutamate--tRNA ligase type 1 subfamily. In terms of assembly, monomer.

The protein localises to the cytoplasm. The catalysed reaction is tRNA(Glu) + L-glutamate + ATP = L-glutamyl-tRNA(Glu) + AMP + diphosphate. In terms of biological role, catalyzes the attachment of glutamate to tRNA(Glu) in a two-step reaction: glutamate is first activated by ATP to form Glu-AMP and then transferred to the acceptor end of tRNA(Glu). This chain is Glutamate--tRNA ligase, found in Bordetella petrii (strain ATCC BAA-461 / DSM 12804 / CCUG 43448).